Consider the following 798-residue polypeptide: PR domain zinc finger protein 4 (798 aa).

In terms of domain architecture, SET spans 408–525; it reads KQLVLRQSIV…PENELLFYYS (118 aa). C2H2-type zinc fingers lie at residues 586–608, 614–636, 642–664, 670–692, and 698–720; these read WKCSMCPQAFISPSKLHVHFMGH, HKCDFCSKAFSDPSNLRTHLKIH, YRCTLCDKSFTQKAHLESHMVIH, LKCDYCDKLFMRRQDLKQHVLIH, and IKCPKCDKLFLRTNHLKKHLNSH. Residues 726–747 form a C2H2-type 6; degenerate zinc finger; sequence YVCEKCTKAYLTKYHLTRHLKA. The segment at 750–798 is disordered; sequence EPASSSSAQDDEDEDGDSGEDGLPGSMTTEGCRMSSAVYSADESLSAHK. Residues 758-769 show a composition bias toward acidic residues; that stretch reads QDDEDEDGDSGE.

The protein belongs to the class V-like SAM-binding methyltransferase superfamily.

It localises to the nucleus. Functionally, may function as a transcription factor involved in cell differentiation. The chain is PR domain zinc finger protein 4 (Prdm4) from Rattus norvegicus (Rat).